Reading from the N-terminus, the 318-residue chain is Protoheme IX farnesyltransferase (318 aa).

Helical transmembrane passes span 34-54 (VMSL…GQIN), 55-75 (PVIG…SGAL), 95-115 (IPAG…LSAF), 118-138 (IILG…TIFF), 155-175 (IVIG…CVTG), 182-202 (IVLF…LALF), 228-250 (IVVY…FASL), 254-273 (AFAT…VLRM), and 287-307 (FAFS…DYMI).

Belongs to the UbiA prenyltransferase family. Protoheme IX farnesyltransferase subfamily.

Its subcellular location is the cell inner membrane. The catalysed reaction is heme b + (2E,6E)-farnesyl diphosphate + H2O = Fe(II)-heme o + diphosphate. It functions in the pathway porphyrin-containing compound metabolism; heme O biosynthesis; heme O from protoheme: step 1/1. Functionally, converts heme B (protoheme IX) to heme O by substitution of the vinyl group on carbon 2 of heme B porphyrin ring with a hydroxyethyl farnesyl side group. The sequence is that of Protoheme IX farnesyltransferase from Sinorhizobium fredii (strain NBRC 101917 / NGR234).